A 214-amino-acid chain; its full sequence is Putative nickel/cobalt efflux system MJ1092 (214 aa).

The next 6 membrane-spanning stretches (helical) occupy residues 2–22 (VMIM…LHAL), 46–66 (ILLG…LGIL), 79–99 (VHDM…IWII), 116–136 (VITL…AVLL), 149–169 (IYVA…AVAF), and 188–208 (LPLI…AHPI).

This sequence belongs to the NiCoT transporter (TC 2.A.52) family.

It localises to the cell membrane. Its function is as follows. Efflux system for nickel and cobalt. This chain is Putative nickel/cobalt efflux system MJ1092, found in Methanocaldococcus jannaschii (strain ATCC 43067 / DSM 2661 / JAL-1 / JCM 10045 / NBRC 100440) (Methanococcus jannaschii).